A 198-amino-acid polypeptide reads, in one-letter code: Small ribosomal subunit protein uS11 (198 aa).

2 stretches are compositionally biased toward low complexity: residues 1–11 and 19–58; these read MSGTEAGAGEP and EAAQPEAGAPDAGTPEASAPEAGAAQPEAGTQPEAGTAQP. Disordered stretches follow at residues 1–72 and 178–198; these read MSGT…TPAD and DVTPIPHDTTRKKGGKRGRRV. Residues 187–198 show a composition bias toward basic residues; it reads TRKKGGKRGRRV.

Belongs to the universal ribosomal protein uS11 family. Part of the 30S ribosomal subunit.

Its function is as follows. Located on the platform of the 30S subunit. The sequence is that of Small ribosomal subunit protein uS11 from Cenarchaeum symbiosum (strain A).